Here is a 59-residue protein sequence, read N- to C-terminus: Early growth response protein 1 (59 aa).

C2H2-type zinc fingers lie at residues 1-18 (CDRRFSRSDELTRHIRIH), 24-46 (FQCRICMRNFSRSDHLTTHIRTH), and 52-59 (FACDICGR).

The protein belongs to the EGR C2H2-type zinc-finger protein family.

The protein resides in the nucleus. The protein localises to the cytoplasm. Its function is as follows. Transcriptional regulator. Recognizes and binds to the DNA sequence 5'-GCG(T/G)GGGCG-3'(EGR-site) in the promoter region of target genes. Binds double-stranded target DNA, irrespective of the cytosine methylation status. Regulates the transcription of numerous target genes, and thereby plays an important role in regulating the response to growth factors, DNA damage, and ischemia. Plays a role in the regulation of cell survival, proliferation and cell death. Mediates responses to ischemia and hypoxia; regulates the expression of proteins that are involved in inflammatory processes. Plays a role in regulating the expression of circadian clock genes. This chain is Early growth response protein 1 (EGR1), found in Serinus canaria (Island canary).